The following is a 158-amino-acid chain: NADPH-dependent 7-cyano-7-deazaguanine reductase (158 aa).

The disordered stretch occupies residues 1-37 (MAKRSIKSETSPELQLGRPVTAPDSPETARLDRVPNP). The segment covering 27–37 (ETARLDRVPNP) has biased composition (basic and acidic residues). The active-site Thioimide intermediate is the C56. Residue D63 is the Proton donor of the active site. Substrate contacts are provided by residues 78-80 (VES) and 97-98 (HE).

This sequence belongs to the GTP cyclohydrolase I family. QueF type 1 subfamily.

Its subcellular location is the cytoplasm. The enzyme catalyses 7-aminomethyl-7-carbaguanine + 2 NADP(+) = 7-cyano-7-deazaguanine + 2 NADPH + 3 H(+). The protein operates within tRNA modification; tRNA-queuosine biosynthesis. Its function is as follows. Catalyzes the NADPH-dependent reduction of 7-cyano-7-deazaguanine (preQ0) to 7-aminomethyl-7-deazaguanine (preQ1). The chain is NADPH-dependent 7-cyano-7-deazaguanine reductase from Bradyrhizobium sp. (strain BTAi1 / ATCC BAA-1182).